The primary structure comprises 149 residues: Transcriptional repressor NrdR (149 aa).

A zinc finger spans residues 3 to 34; it reads CPFCSATDTKVIDSRLVAEGHQVRRRRECTEC. The region spanning 49–139 is the ATP-cone domain; sequence PRVIKRDGSR…VYRAFEDVSE (91 aa).

It belongs to the NrdR family. The cofactor is Zn(2+).

Negatively regulates transcription of bacterial ribonucleotide reductase nrd genes and operons by binding to NrdR-boxes. The polypeptide is Transcriptional repressor NrdR (Shewanella putrefaciens (strain CN-32 / ATCC BAA-453)).